A 214-amino-acid chain; its full sequence is Large ribosomal subunit protein uL3 (214 aa).

The residue at position 153 (glutamine 153) is an N5-methylglutamine.

The protein belongs to the universal ribosomal protein uL3 family. Part of the 50S ribosomal subunit. Forms a cluster with proteins L14 and L19. Post-translationally, methylated by PrmB.

Functionally, one of the primary rRNA binding proteins, it binds directly near the 3'-end of the 23S rRNA, where it nucleates assembly of the 50S subunit. In Aromatoleum aromaticum (strain DSM 19018 / LMG 30748 / EbN1) (Azoarcus sp. (strain EbN1)), this protein is Large ribosomal subunit protein uL3.